The primary structure comprises 437 residues: Trypacidin cluster transcriptional coactivator tpcD (437 aa).

One can recognise an HTH iclR-type domain in the interval 75-144 (LAVQSQLLSC…PQRGHVAHSP (70 aa)). The H-T-H motif DNA-binding region spans 105–124 (IADLARLSGVPEAQLARIIR).

As to expression, specifically expressed in conidia.

The protein localises to the nucleus. In terms of biological role, transcriptional coactivator; part of the gene cluster that mediates the biosynthesis of trypacidin, a mycotoxin with antiprotozoal activity and that plays a role in the infection process. With tpcE, coregulates the production of trypacidin. The polypeptide is Trypacidin cluster transcriptional coactivator tpcD (Aspergillus fumigatus (strain ATCC MYA-4609 / CBS 101355 / FGSC A1100 / Af293) (Neosartorya fumigata)).